Consider the following 404-residue polypeptide: Ethanolamine-phosphate cytidylyltransferase (404 aa).

The tract at residues 173–201 is disordered; it reads YADSFGKPPHPTPAGDTLSSEVSSQCPGG. Residues 189–201 are compositionally biased toward polar residues; sequence TLSSEVSSQCPGG. CTP-binding positions include 239–240, 247–250, lysine 277, 325–328, and 354–358; these read AF, HVDF, HGKT, and SGSDL. The residue at position 356 (serine 356) is a Phosphoserine. Phosphothreonine occurs at positions 359 and 360.

The protein belongs to the cytidylyltransferase family.

The enzyme catalyses phosphoethanolamine + CTP + H(+) = CDP-ethanolamine + diphosphate. It functions in the pathway phospholipid metabolism; phosphatidylethanolamine biosynthesis; phosphatidylethanolamine from ethanolamine: step 2/3. In terms of biological role, ethanolamine-phosphate cytidylyltransferase that catalyzes the second step in the synthesis of phosphatidylethanolamine (PE) from ethanolamine via the CDP-ethanolamine pathway. Phosphatidylethanolamine is a dominant inner-leaflet phospholipid in cell membranes, where it plays a role in membrane function by structurally stabilizing membrane-anchored proteins, and participates in important cellular processes such as cell division, cell fusion, blood coagulation, and apoptosis. The polypeptide is Ethanolamine-phosphate cytidylyltransferase (Pcyt2) (Mus musculus (Mouse)).